A 213-amino-acid polypeptide reads, in one-letter code: Adenylate kinase (213 aa).

14–19 (GSGKGT) lines the ATP pocket. Residues 34-63 (SSGNLLRSAIKASTPLGIKASEYIDEGQLV) are NMP. AMP-binding positions include Ser-35, Arg-40, 61–63 (QLV), 89–92 (GFPR), and Gln-96. The tract at residues 129–162 (SRFICPSCNFVYNQSQGFRECPTCHSELVRRSDD) is LID. ATP is bound at residue Arg-130. Residues Cys-133 and Cys-136 each coordinate Zn(2+). Position 139-140 (139-140 (VY)) interacts with ATP. The Zn(2+) site is built by Cys-149 and Cys-152. The AMP site is built by Arg-159 and Arg-170. Lys-198 provides a ligand contact to ATP.

It belongs to the adenylate kinase family. As to quaternary structure, monomer.

The protein localises to the cytoplasm. It carries out the reaction AMP + ATP = 2 ADP. The protein operates within purine metabolism; AMP biosynthesis via salvage pathway; AMP from ADP: step 1/1. Catalyzes the reversible transfer of the terminal phosphate group between ATP and AMP. Plays an important role in cellular energy homeostasis and in adenine nucleotide metabolism. The chain is Adenylate kinase from Chlamydia felis (strain Fe/C-56) (Chlamydophila felis).